The following is a 339-amino-acid chain: Adenylosuccinate synthetase (339 aa).

Residues 12 to 18 (GDEGKGS) and 42 to 44 (GHS) contribute to the GTP site. Catalysis depends on aspartate 13, which acts as the Proton acceptor. Residues aspartate 13 and glycine 42 each coordinate Mg(2+). IMP contacts are provided by residues 13 to 16 (DEGK), 40 to 43 (NAGH), threonine 127, arginine 141, glutamine 179, threonine 194, and arginine 256. Histidine 43 acts as the Proton donor in catalysis. Position 252–258 (252–258 (TVTGRRR)) interacts with substrate. GTP-binding positions include arginine 258, 284–286 (MLD), and 324–326 (KTG).

This sequence belongs to the adenylosuccinate synthetase family. As to quaternary structure, homodimer. Mg(2+) is required as a cofactor.

It is found in the cytoplasm. It catalyses the reaction IMP + L-aspartate + GTP = N(6)-(1,2-dicarboxyethyl)-AMP + GDP + phosphate + 2 H(+). The protein operates within purine metabolism; AMP biosynthesis via de novo pathway; AMP from IMP: step 1/2. Its function is as follows. Plays an important role in the de novo pathway of purine nucleotide biosynthesis. Catalyzes the first committed step in the biosynthesis of AMP from IMP. The protein is Adenylosuccinate synthetase of Thermococcus sibiricus (strain DSM 12597 / MM 739).